We begin with the raw amino-acid sequence, 499 residues long: Cytochrome P450 81E8 (499 aa).

The chain crosses the membrane as a helical span at residues 3–23; sequence TFYLSLIISLFFLIITLKVFF. C436 contributes to the heme binding site.

It belongs to the cytochrome P450 family. Heme is required as a cofactor.

It is found in the membrane. Probable monooxygenases exhibiting no activity with isoflavones such as formononetin, biochanin A, pseudobaptigenin, daidzein, genistein, isoformononetin and prunetin, or with flavonoids including naringenin, liquiritigenin, apigenin, luteolin, or kaempferol. This is Cytochrome P450 81E8 from Medicago truncatula (Barrel medic).